A 1210-amino-acid chain; its full sequence is uncharacterized protein (1210 aa).

It to E.coli molybdate metabolism regulator (MolR).

This is an uncharacterized protein from Escherichia coli (strain K12).